Consider the following 241-residue polypeptide: MTGLEILPAVDVAGGQAVRLVQGAAGTETRYGSPLEAALAWQAAGARWIHLVDLDAAFGRGSNRELLAEIVARVDVAVELSGGIRDDESLRVALATGCARVNIGTAALENPEWVRRVVAEYGEKIAVGLDVRDGRLAARGWTKDGGELFEVLARLDADGCARYVVTDVARDGTLGGPNIELLRAVCAATDRPVVASGGISSLDDVRAVAALVPLGVEGLIIGKALYAGVFSLREAMTAAQA.

Aspartate 11 acts as the Proton acceptor in catalysis. The active-site Proton donor is aspartate 130.

Belongs to the HisA/HisF family.

Its subcellular location is the cytoplasm. It catalyses the reaction 1-(5-phospho-beta-D-ribosyl)-5-[(5-phospho-beta-D-ribosylamino)methylideneamino]imidazole-4-carboxamide = 5-[(5-phospho-1-deoxy-D-ribulos-1-ylimino)methylamino]-1-(5-phospho-beta-D-ribosyl)imidazole-4-carboxamide. It participates in amino-acid biosynthesis; L-histidine biosynthesis; L-histidine from 5-phospho-alpha-D-ribose 1-diphosphate: step 4/9. This Acidothermus cellulolyticus (strain ATCC 43068 / DSM 8971 / 11B) protein is 1-(5-phosphoribosyl)-5-[(5-phosphoribosylamino)methylideneamino] imidazole-4-carboxamide isomerase.